Here is a 323-residue protein sequence, read N- to C-terminus: tRNA N6-adenosine threonylcarbamoyltransferase (323 aa).

Positions 110 and 114 each coordinate Fe cation. Substrate-binding positions include 131-135, aspartate 164, glycine 177, and asparagine 264; that span reads VASGG. Aspartate 288 is a binding site for Fe cation.

Belongs to the KAE1 / TsaD family. Fe(2+) serves as cofactor.

The protein resides in the cytoplasm. It carries out the reaction L-threonylcarbamoyladenylate + adenosine(37) in tRNA = N(6)-L-threonylcarbamoyladenosine(37) in tRNA + AMP + H(+). In terms of biological role, required for the formation of a threonylcarbamoyl group on adenosine at position 37 (t(6)A37) in tRNAs that read codons beginning with adenine. Is involved in the transfer of the threonylcarbamoyl moiety of threonylcarbamoyl-AMP (TC-AMP) to the N6 group of A37, together with TsaE and TsaB. TsaD likely plays a direct catalytic role in this reaction. This Thermus thermophilus (strain ATCC BAA-163 / DSM 7039 / HB27) protein is tRNA N6-adenosine threonylcarbamoyltransferase.